A 220-amino-acid polypeptide reads, in one-letter code: Iron-sulfur cluster repair protein YtfE (220 aa).

It belongs to the RIC family. YtfE subfamily. As to quaternary structure, homodimer.

Its subcellular location is the cytoplasm. Its function is as follows. Di-iron-containing protein involved in the repair of iron-sulfur clusters damaged by oxidative and nitrosative stress conditions. The chain is Iron-sulfur cluster repair protein YtfE from Salmonella schwarzengrund (strain CVM19633).